The primary structure comprises 541 residues: Phosphoenolpyruvate carboxykinase (ATP) (541 aa).

Substrate is bound by residues arginine 67, tyrosine 207, and lysine 213. ATP contacts are provided by residues lysine 213, histidine 232, and 248 to 256; that span reads GLSGTGKTT. Positions 213 and 232 each coordinate Mn(2+). Position 269 (aspartate 269) interacts with Mn(2+). ATP contacts are provided by residues glutamate 297, arginine 333, 449 to 450, and threonine 455; that span reads RI. Arginine 333 contributes to the substrate binding site.

Belongs to the phosphoenolpyruvate carboxykinase (ATP) family. In terms of assembly, monomer. Requires Mn(2+) as cofactor.

It localises to the cytoplasm. The catalysed reaction is oxaloacetate + ATP = phosphoenolpyruvate + ADP + CO2. The protein operates within carbohydrate biosynthesis; gluconeogenesis. In terms of biological role, involved in the gluconeogenesis. Catalyzes the conversion of oxaloacetate (OAA) to phosphoenolpyruvate (PEP) through direct phosphoryl transfer between the nucleoside triphosphate and OAA. The polypeptide is Phosphoenolpyruvate carboxykinase (ATP) (Vibrio atlanticus (strain LGP32) (Vibrio splendidus (strain Mel32))).